We begin with the raw amino-acid sequence, 116 residues long: Large ribosomal subunit protein bL20 (116 aa).

Belongs to the bacterial ribosomal protein bL20 family.

Binds directly to 23S ribosomal RNA and is necessary for the in vitro assembly process of the 50S ribosomal subunit. It is not involved in the protein synthesizing functions of that subunit. The chain is Large ribosomal subunit protein bL20 from Helicobacter pylori (strain HPAG1).